Here is a 71-residue protein sequence, read N- to C-terminus: Heat-stable enterotoxin II (71 aa).

An N-terminal signal peptide occupies residues 1–23 (MKKNIAFLLASMFVFSIATNAYA). 2 disulfide bridges follow: C33-C71 and C44-C59.

It is found in the secreted. Its function is as follows. Toxin which activates the particulate form of guanylate cyclase and increases cyclic GMP levels within the host intestinal epithelial cells. The protein is Heat-stable enterotoxin II (stiI) of Escherichia coli.